Here is a 464-residue protein sequence, read N- to C-terminus: Argininosuccinate lyase (464 aa).

Belongs to the lyase 1 family. Argininosuccinate lyase subfamily.

Its subcellular location is the cytoplasm. The enzyme catalyses 2-(N(omega)-L-arginino)succinate = fumarate + L-arginine. The protein operates within amino-acid biosynthesis; L-arginine biosynthesis; L-arginine from L-ornithine and carbamoyl phosphate: step 3/3. This Crocosphaera subtropica (strain ATCC 51142 / BH68) (Cyanothece sp. (strain ATCC 51142)) protein is Argininosuccinate lyase.